The sequence spans 46 residues: Myoregulin (46 aa).

The Cytoplasmic segment spans residues 1–21 (MTGKNWILISTTTPKSLEDEI). A helical membrane pass occupies residues 22 to 42 (VGRLLKILFVIFVDLISIIYV). At 43–46 (VITS) the chain is on the lumenal side.

In terms of assembly, homooligomer. Monomer. Interacts with ATP2A1/SERCA1. Interacts as a monomer with ATP2A2/SERCA2; the interaction inhibits ATP2A2 activity.

The protein resides in the sarcoplasmic reticulum membrane. Its function is as follows. Inhibits the activity of ATP2A1/SERCA1 ATPase in sarcoplasmic reticulum by decreasing the apparent affinity of the ATPase for Ca(2+), thereby acting as a key regulator of skeletal muscle activity. Its high expression in adult skeletal muscle, suggests that it constitutes the predominant regulator of ATP2A1/SERCA1 in adult skeletal muscle. Also inhibits the activity of ATP2A2/SERCA2 and ATP2A3/SERCA3. In Homo sapiens (Human), this protein is Myoregulin.